The sequence spans 417 residues: Tyrosine--tRNA ligase (417 aa).

Tyrosine 35 provides a ligand contact to L-tyrosine. The 'HIGH' region signature appears at 40–49 (ATAGSLTVGH). L-tyrosine is bound by residues tyrosine 165 and glutamine 169. The 'KMSKS' region signature appears at 229 to 233 (KFGKS). Position 232 (lysine 232) interacts with ATP. The S4 RNA-binding domain occupies 350–416 (ISLLEALVFT…GKRFNALIIF (67 aa)).

It belongs to the class-I aminoacyl-tRNA synthetase family. TyrS type 1 subfamily. In terms of assembly, homodimer.

The protein resides in the cytoplasm. The enzyme catalyses tRNA(Tyr) + L-tyrosine + ATP = L-tyrosyl-tRNA(Tyr) + AMP + diphosphate + H(+). In terms of biological role, catalyzes the attachment of tyrosine to tRNA(Tyr) in a two-step reaction: tyrosine is first activated by ATP to form Tyr-AMP and then transferred to the acceptor end of tRNA(Tyr). This chain is Tyrosine--tRNA ligase, found in Phytoplasma mali (strain AT).